A 268-amino-acid chain; its full sequence is Putative hydro-lyase Arad_8587 (268 aa).

It belongs to the D-glutamate cyclase family.

This is Putative hydro-lyase Arad_8587 from Rhizobium rhizogenes (strain K84 / ATCC BAA-868) (Agrobacterium radiobacter).